The following is a 236-amino-acid chain: Probable chemoreceptor glutamine deamidase CheD (236 aa).

A disordered region spans residues 1–20 (MIEFGKRATPQSAADAVRGD).

The protein belongs to the CheD family.

The enzyme catalyses L-glutaminyl-[protein] + H2O = L-glutamyl-[protein] + NH4(+). Its function is as follows. Probably deamidates glutamine residues to glutamate on methyl-accepting chemotaxis receptors (MCPs), playing an important role in chemotaxis. The protein is Probable chemoreceptor glutamine deamidase CheD of Ralstonia pickettii (strain 12J).